A 185-amino-acid polypeptide reads, in one-letter code: Elongation factor P (185 aa).

Belongs to the elongation factor P family.

It is found in the cytoplasm. The protein operates within protein biosynthesis; polypeptide chain elongation. Involved in peptide bond synthesis. Stimulates efficient translation and peptide-bond synthesis on native or reconstituted 70S ribosomes in vitro. Probably functions indirectly by altering the affinity of the ribosome for aminoacyl-tRNA, thus increasing their reactivity as acceptors for peptidyl transferase. This chain is Elongation factor P, found in Alkaliphilus metalliredigens (strain QYMF).